Here is a 607-residue protein sequence, read N- to C-terminus: 1-deoxy-D-xylulose-5-phosphate synthase (607 aa).

Residues H63 and G104–S106 each bind thiamine diphosphate. D135 provides a ligand contact to Mg(2+). Thiamine diphosphate contacts are provided by residues G136–A137, N164, Y271, and E351. N164 is a binding site for Mg(2+).

Belongs to the transketolase family. DXPS subfamily. As to quaternary structure, homodimer. Mg(2+) is required as a cofactor. Requires thiamine diphosphate as cofactor.

The catalysed reaction is D-glyceraldehyde 3-phosphate + pyruvate + H(+) = 1-deoxy-D-xylulose 5-phosphate + CO2. The protein operates within metabolic intermediate biosynthesis; 1-deoxy-D-xylulose 5-phosphate biosynthesis; 1-deoxy-D-xylulose 5-phosphate from D-glyceraldehyde 3-phosphate and pyruvate: step 1/1. Functionally, catalyzes the acyloin condensation reaction between C atoms 2 and 3 of pyruvate and glyceraldehyde 3-phosphate to yield 1-deoxy-D-xylulose-5-phosphate (DXP). The protein is 1-deoxy-D-xylulose-5-phosphate synthase of Campylobacter hominis (strain ATCC BAA-381 / DSM 21671 / CCUG 45161 / LMG 19568 / NCTC 13146 / CH001A).